Consider the following 158-residue polypeptide: NADH-quinone oxidoreductase subunit B 1 (158 aa).

Positions 37, 38, 102, and 132 each coordinate [4Fe-4S] cluster.

Belongs to the complex I 20 kDa subunit family. In terms of assembly, NDH-1 is composed of 14 different subunits. Subunits NuoB, C, D, E, F, and G constitute the peripheral sector of the complex. The cofactor is [4Fe-4S] cluster.

The protein resides in the cell inner membrane. It catalyses the reaction a quinone + NADH + 5 H(+)(in) = a quinol + NAD(+) + 4 H(+)(out). NDH-1 shuttles electrons from NADH, via FMN and iron-sulfur (Fe-S) centers, to quinones in the respiratory chain. Couples the redox reaction to proton translocation (for every two electrons transferred, four hydrogen ions are translocated across the cytoplasmic membrane), and thus conserves the redox energy in a proton gradient. The sequence is that of NADH-quinone oxidoreductase subunit B 1 from Azoarcus sp. (strain BH72).